We begin with the raw amino-acid sequence, 178 residues long: Crossover junction endodeoxyribonuclease RuvC (178 aa).

Active-site residues include D11, E71, and D143. Mg(2+) contacts are provided by D11, E71, and D143.

This sequence belongs to the RuvC family. In terms of assembly, homodimer which binds Holliday junction (HJ) DNA. The HJ becomes 2-fold symmetrical on binding to RuvC with unstacked arms; it has a different conformation from HJ DNA in complex with RuvA. In the full resolvosome a probable DNA-RuvA(4)-RuvB(12)-RuvC(2) complex forms which resolves the HJ. Mg(2+) serves as cofactor.

It is found in the cytoplasm. It catalyses the reaction Endonucleolytic cleavage at a junction such as a reciprocal single-stranded crossover between two homologous DNA duplexes (Holliday junction).. In terms of biological role, the RuvA-RuvB-RuvC complex processes Holliday junction (HJ) DNA during genetic recombination and DNA repair. Endonuclease that resolves HJ intermediates. Cleaves cruciform DNA by making single-stranded nicks across the HJ at symmetrical positions within the homologous arms, yielding a 5'-phosphate and a 3'-hydroxyl group; requires a central core of homology in the junction. The consensus cleavage sequence is 5'-(A/T)TT(C/G)-3'. Cleavage occurs on the 3'-side of the TT dinucleotide at the point of strand exchange. HJ branch migration catalyzed by RuvA-RuvB allows RuvC to scan DNA until it finds its consensus sequence, where it cleaves and resolves the cruciform DNA. This chain is Crossover junction endodeoxyribonuclease RuvC, found in Neisseria meningitidis serogroup B (strain ATCC BAA-335 / MC58).